Here is a 912-residue protein sequence, read N- to C-terminus: Isoleucine--tRNA ligase (912 aa).

A 'HIGH' region motif is present at residues 57–67 (PYANGDIHLGT). Glu549 serves as a coordination point for L-isoleucyl-5'-AMP. Positions 590–594 (KMSKS) match the 'KMSKS' region motif. Lys593 serves as a coordination point for ATP. Residues Cys880, Cys883, Cys900, and Cys903 each coordinate Zn(2+).

It belongs to the class-I aminoacyl-tRNA synthetase family. IleS type 1 subfamily. As to quaternary structure, monomer. It depends on Zn(2+) as a cofactor.

The protein localises to the cytoplasm. The catalysed reaction is tRNA(Ile) + L-isoleucine + ATP = L-isoleucyl-tRNA(Ile) + AMP + diphosphate. Functionally, catalyzes the attachment of isoleucine to tRNA(Ile). As IleRS can inadvertently accommodate and process structurally similar amino acids such as valine, to avoid such errors it has two additional distinct tRNA(Ile)-dependent editing activities. One activity is designated as 'pretransfer' editing and involves the hydrolysis of activated Val-AMP. The other activity is designated 'posttransfer' editing and involves deacylation of mischarged Val-tRNA(Ile). In Fervidobacterium pennivorans (strain DSM 9078 / Ven5), this protein is Isoleucine--tRNA ligase.